The sequence spans 313 residues: Proline iminopeptidase (313 aa).

One can recognise an AB hydrolase-1 domain in the interval 35 to 298; sequence KPVVILHGGP…TPGAGHSAFE (264 aa). The active-site Nucleophile is the Ser110. Asp266 is a catalytic residue. The Proton donor role is filled by His294.

This sequence belongs to the peptidase S33 family.

It is found in the cytoplasm. The enzyme catalyses Release of N-terminal proline from a peptide.. Specifically catalyzes the removal of N-terminal proline residues from peptides. The protein is Proline iminopeptidase (pip) of Xylella fastidiosa (strain 9a5c).